The following is a 115-amino-acid chain: Large ribosomal subunit protein uL24 (115 aa).

The protein belongs to the universal ribosomal protein uL24 family. In terms of assembly, part of the 50S ribosomal subunit.

One of two assembly initiator proteins, it binds directly to the 5'-end of the 23S rRNA, where it nucleates assembly of the 50S subunit. Functionally, one of the proteins that surrounds the polypeptide exit tunnel on the outside of the subunit. The polypeptide is Large ribosomal subunit protein uL24 (Synechocystis sp. (strain ATCC 27184 / PCC 6803 / Kazusa)).